The sequence spans 332 residues: L-lactate dehydrogenase A chain (332 aa).

NAD(+) is bound by residues 29–57 (GMVG…MEDK) and arginine 99. Arginine 106, asparagine 138, and arginine 169 together coordinate substrate. Asparagine 138 serves as a coordination point for NAD(+). Catalysis depends on histidine 193, which acts as the Proton acceptor. Threonine 248 is a substrate binding site.

This sequence belongs to the LDH/MDH superfamily. LDH family. In terms of assembly, homotetramer.

The protein localises to the cytoplasm. It carries out the reaction (S)-lactate + NAD(+) = pyruvate + NADH + H(+). The protein operates within fermentation; pyruvate fermentation to lactate; (S)-lactate from pyruvate: step 1/1. Functionally, interconverts simultaneously and stereospecifically pyruvate and lactate with concomitant interconversion of NADH and NAD(+). The chain is L-lactate dehydrogenase A chain (ldha) from Sphyraena idiastes (Pelican barracuda).